We begin with the raw amino-acid sequence, 332 residues long: Homeobox protein SIX3 (332 aa).

Residues 72–119 (APPEELSMFQLPTLNFSPEQVASVCETLEETGDIERLGRFLWSLPVAP) form an interaction with TLE5 region. A DNA-binding region (homeobox) is located at residues 206–265 (GEQKTHCFKERTRSLLREWYLQDPYPNPSKKRELAQATGLTPTQVGNWFKNRRQRDRAAA). Positions 232–234 (NPS) are bind to RHO promoter. Disordered regions lie at residues 232-251 (NPSK…TQVG) and 258-332 (RQRD…ECDV). Residues 293-309 (SAESPSTAASPTTSVSS) are compositionally biased toward low complexity. Residues 316–332 (TGTSILSVTSSDSECDV) show a composition bias toward polar residues.

This sequence belongs to the SIX/Sine oculis homeobox family. In terms of assembly, interacts with EYA4; translocates EYA4 from the cytoplasm to the nucleus and promotes activation of their target genes. Interacts with MTA1 and HDAC2; represses its own transcription. Interacts with MTA1; facilitates the binding of SIX3 to the core DNA motif of SIX3 promoter. Interacts with EYA1; promotes EYA1 translocation to the nucleus. Interacts with TLE1 and TLE5 (via Q domain); can act in combination with either TLE1 and/or TLE5 leading to transcriptional repression or activation, respectively. Interacts (via homeobox) with NR4A3; differentially regulates the transcriptional activities NR4A3. Interacts with GMNN. Interacts with TLE4.

It is found in the nucleus. In terms of biological role, transcriptional regulator which can act as both a transcriptional repressor and activator by binding a ATTA homeodomain core recognition sequence on these target genes. During forebrain development represses WNT1 expression allowing zona limitans intrathalamica formation and thereby ensuring proper anterio-posterior patterning of the diencephalon and formation of the rostral diencephalon. Acts as a direct upstream activator of SHH expression in the rostral diencephalon ventral midline and that in turn SHH maintains its expression. In addition, Six3 activity is required for the formation of the telencephalon. During postnatal stages of brain development is necessary for ependymal cell maturation by promoting the maturation of radial glia into ependymal cells through regulation of neuroblast proliferation and migration. Acts on the proliferation and differentiation of neural progenitor cells through activating transcription of CCND1 and CCND2. During early lens formation plays a role in lens induction and specification by activating directly PAX6 in the presumptive lens ectoderm. In turn PAX6 activates SIX3 resulting in activation of PDGFRA and CCND1 promoting cell proliferation. Also is required for the neuroretina development by directly suppressing WNT8B expression in the anterior neural plate territory. Its action during retina development and lens morphogenesis is TLE5 and TLE4-dependent manner. Furthermore, during eye development regulates several genes expression. Before and during early lens development represses the CRYGF promoter by binding a SIX repressor element. Directly activates RHO transcription, or cooperates with CRX or NRL. Six3 also functions in the formation of the proximodistal axis of the optic cup, and promotes the formation of optic vesicles-like structures. During pituitary development, acts in parallel or alternatively with HESX1 to control cell proliferation through Wnt/beta-catenin pathway. Plays a role in eye development by suppressing WNT1 expression and in dorsal-ventral patterning by repressing BMP signaling pathway. This is Homeobox protein SIX3 (SIX3) from Homo sapiens (Human).